Reading from the N-terminus, the 513-residue chain is Zinc finger CCCH-type with G patch domain-containing protein (513 aa).

At Met-1 the chain carries N-acetylmethionine. Residues 92-131 (PVAPGAELETVPSRETGPGPTEPGQEEDDGEDEEGGAALS) form a disordered region. Positions 115–126 (GQEEDDGEDEEG) are enriched in acidic residues. The C3H1-type zinc-finger motif lies at 176-202 (KSLKPCPFFLEGKCRFQENCRFSHGQV). Residues 267-298 (LPPLRTDPAGSSDSDGSDADDPSYARVVEPGA) form a disordered region. Residues Ser-278 and Ser-355 each carry the phosphoserine modification. In terms of domain architecture, G-patch spans 315–361 (TRGIGSRLLAKMGYEFGKGLGRRADGRVEPVHAVVLPRGKSLDQCAE). 2 disordered regions span residues 367-394 (TRAG…PPPR) and 493-513 (QEAG…MTEF). Over residues 497–513 (LQREQRKADTHKKMTEF) the composition is skewed to basic and acidic residues.

As to quaternary structure, interacts with CHD4/Mi-2; the interaction is direct.

It localises to the nucleus. Transcription repressor that specifically binds the 5'-GGAG[GA]A[GA]A-3' consensus sequence. Represses transcription by recruiting the chromatin multiprotein complex NuRD to target promoters. Negatively regulates expression of EGFR, a gene involved in cell proliferation, survival and migration. Its ability to repress genes of the EGFR pathway suggest it may act as a tumor suppressor. The protein is Zinc finger CCCH-type with G patch domain-containing protein (ZGPAT) of Ovis aries (Sheep).